A 284-amino-acid polypeptide reads, in one-letter code: Probable endonuclease 4 (284 aa).

Residues His-66, His-106, Glu-142, Asp-176, His-179, His-213, Asp-226, His-228, and Glu-258 each coordinate Zn(2+).

The protein belongs to the AP endonuclease 2 family. Zn(2+) is required as a cofactor.

The catalysed reaction is Endonucleolytic cleavage to 5'-phosphooligonucleotide end-products.. Its function is as follows. Endonuclease IV plays a role in DNA repair. It cleaves phosphodiester bonds at apurinic or apyrimidinic (AP) sites, generating a 3'-hydroxyl group and a 5'-terminal sugar phosphate. This is Probable endonuclease 4 from Natranaerobius thermophilus (strain ATCC BAA-1301 / DSM 18059 / JW/NM-WN-LF).